Consider the following 95-residue polypeptide: Large ribosomal subunit protein uL23 (95 aa).

This sequence belongs to the universal ribosomal protein uL23 family. As to quaternary structure, contacts protein L29, and trigger factor when it is bound to the ribosome. Part of the 50S ribosomal subunit.

One of the early assembly proteins it binds 23S rRNA. One of the proteins that surrounds the polypeptide exit tunnel on the outside of the ribosome. Forms the main docking site for trigger factor binding to the ribosome. The protein is Large ribosomal subunit protein uL23 of Geobacillus stearothermophilus (Bacillus stearothermophilus).